A 938-amino-acid polypeptide reads, in one-letter code: Isoleucine--tRNA ligase (938 aa).

Positions Pro58 to His68 match the 'HIGH' region motif. An N6-acetyllysine modification is found at Lys183. Glu561 contributes to the L-isoleucyl-5'-AMP binding site. A 'KMSKS' region motif is present at residues Lys602–Ser606. Lys605 is a binding site for ATP. Residues Cys901, Cys904, Cys921, and Cys924 each contribute to the Zn(2+) site.

The protein belongs to the class-I aminoacyl-tRNA synthetase family. IleS type 1 subfamily. As to quaternary structure, monomer. The cofactor is Zn(2+).

It localises to the cytoplasm. It carries out the reaction tRNA(Ile) + L-isoleucine + ATP = L-isoleucyl-tRNA(Ile) + AMP + diphosphate. Functionally, catalyzes the attachment of isoleucine to tRNA(Ile). As IleRS can inadvertently accommodate and process structurally similar amino acids such as valine, to avoid such errors it has two additional distinct tRNA(Ile)-dependent editing activities. One activity is designated as 'pretransfer' editing and involves the hydrolysis of activated Val-AMP. The other activity is designated 'posttransfer' editing and involves deacylation of mischarged Val-tRNA(Ile). This is Isoleucine--tRNA ligase from Escherichia fergusonii (strain ATCC 35469 / DSM 13698 / CCUG 18766 / IAM 14443 / JCM 21226 / LMG 7866 / NBRC 102419 / NCTC 12128 / CDC 0568-73).